The chain runs to 414 residues: Dual-specificity RNA methyltransferase RlmN (414 aa).

Residue glutamate 127 is the Proton acceptor of the active site. A Radical SAM core domain is found at 133 to 380 (GEGRGTLCVS…SPIRMPRGRD (248 aa)). A disulfide bridge links cysteine 140 with cysteine 385. Positions 147, 151, and 154 each coordinate [4Fe-4S] cluster. S-adenosyl-L-methionine is bound by residues 211-212 (GE), serine 243, 265-267 (SLH), and asparagine 342. The active-site S-methylcysteine intermediate is cysteine 385.

This sequence belongs to the radical SAM superfamily. RlmN family. It depends on [4Fe-4S] cluster as a cofactor.

It is found in the cytoplasm. It carries out the reaction adenosine(2503) in 23S rRNA + 2 reduced [2Fe-2S]-[ferredoxin] + 2 S-adenosyl-L-methionine = 2-methyladenosine(2503) in 23S rRNA + 5'-deoxyadenosine + L-methionine + 2 oxidized [2Fe-2S]-[ferredoxin] + S-adenosyl-L-homocysteine. The enzyme catalyses adenosine(37) in tRNA + 2 reduced [2Fe-2S]-[ferredoxin] + 2 S-adenosyl-L-methionine = 2-methyladenosine(37) in tRNA + 5'-deoxyadenosine + L-methionine + 2 oxidized [2Fe-2S]-[ferredoxin] + S-adenosyl-L-homocysteine. Its function is as follows. Specifically methylates position 2 of adenine 2503 in 23S rRNA and position 2 of adenine 37 in tRNAs. m2A2503 modification seems to play a crucial role in the proofreading step occurring at the peptidyl transferase center and thus would serve to optimize ribosomal fidelity. The sequence is that of Dual-specificity RNA methyltransferase RlmN from Bartonella bacilliformis (strain ATCC 35685 / KC583 / Herrer 020/F12,63).